Here is a 212-residue protein sequence, read N- to C-terminus: Urease accessory protein UreG (212 aa).

Gly11–Thr18 contacts GTP.

Belongs to the SIMIBI class G3E GTPase family. UreG subfamily. In terms of assembly, homodimer. UreD, UreF and UreG form a complex that acts as a GTP-hydrolysis-dependent molecular chaperone, activating the urease apoprotein by helping to assemble the nickel containing metallocenter of UreC. The UreE protein probably delivers the nickel.

Its subcellular location is the cytoplasm. Its function is as follows. Facilitates the functional incorporation of the urease nickel metallocenter. This process requires GTP hydrolysis, probably effectuated by UreG. This is Urease accessory protein UreG from Trichodesmium erythraeum (strain IMS101).